Here is a 1537-residue protein sequence, read N- to C-terminus: Isocyanide synthase-NRPS hybrid crmA (1537 aa).

The isocyanide synthase domain stretch occupies residues 1-502; the sequence is MFHKEAGISH…CVKAGYAALF (502 aa). The segment at 351-391 is disordered; that stretch reads PSVPVSPGMSSPSAASTSSSGASMQGSAATTPETHSPPTFT. The span at 352–381 shows a compositional bias: low complexity; it reads SVPVSPGMSSPSAASTSSSGASMQGSAATT. Residues 382–391 are compositionally biased toward polar residues; that stretch reads PETHSPPTFT. Residues 573-752 form an adenylation region; the sequence is EAINDPFCFL…GNLIPPREDW (180 aa). Positions 941–1019 constitute a Carrier domain; sequence SSAHSIEDNV…RLSAIIALLA (79 aa). O-(pantetheine 4'-phosphoryl)serine is present on S977. Positions 1293-1526 are transferase; sequence RCLKTTMFLV…LEMLVTDEEF (234 aa).

This sequence in the N-terminal section; belongs to the isocyanide synthase family. In the C-terminal section; belongs to the NRP synthetase family.

It functions in the pathway secondary metabolite biosynthesis. In terms of biological role, isocyanide synthase-NRPS hybrid; part of the crm gene cluster that mediates the biosynthesis of a yet unidentified copper-responsive metabolite. Converts valine into valine isocyanide that then contributes to two distinct biosynthetic pathways under copper-limiting conditions. Reaction of valine isocyanide with the imine intermediate of festuclavine results in formation of the amide bond in fumivaline A. In addition, valine isocyanide contributes to biosynthesis of a family of acylated sugar alcohols, the D-mannitol-derived fumicicolins. CrmA and associated products inhibit microbial growth from copper-starved A.fumigatus. The chain is Isocyanide synthase-NRPS hybrid crmA from Aspergillus fumigatus (strain ATCC MYA-4609 / CBS 101355 / FGSC A1100 / Af293) (Neosartorya fumigata).